We begin with the raw amino-acid sequence, 338 residues long: Purple acid phosphatase 17 (338 aa).

A signal peptide spans 1-31; sequence MNSGRRSLMSATASLSLLLCIFTTFVVVSNG. Aspartate 53 is a binding site for Fe cation. Asparagine 61 carries an N-linked (GlcNAc...) asparagine glycan. Aspartate 86 and tyrosine 89 together coordinate Fe cation. Residue aspartate 86 participates in Zn(2+) binding. The Zn(2+) site is built by asparagine 124 and histidine 218. Histidine 227 acts as the Proton donor in catalysis. Histidine 253 provides a ligand contact to Zn(2+). 253 to 255 provides a ligand contact to substrate; it reads HDH. Histidine 255 is a binding site for Fe cation.

It belongs to the metallophosphoesterase superfamily. Purple acid phosphatase family. Homodimer. The cofactor is Fe cation. Requires Zn(2+) as cofactor. As to expression, expressed in roots, stems, leaves, flowers and siliques.

The protein resides in the secreted. The enzyme catalyses a phosphate monoester + H2O = an alcohol + phosphate. It carries out the reaction 2 a phenolic donor + H2O2 = 2 a phenolic radical donor + 2 H2O. With respect to regulation, inhibited by phosphate and molybdate. In terms of biological role, metallo-phosphoesterase involved in phosphate metabolism. Has a peroxidase activity. This Arabidopsis thaliana (Mouse-ear cress) protein is Purple acid phosphatase 17 (PAP17).